A 411-amino-acid polypeptide reads, in one-letter code: 4-coumarate--CoA ligase (411 aa).

Belongs to the ATP-dependent AMP-binding enzyme family.

It catalyses the reaction (E)-4-coumarate + ATP + CoA = (E)-4-coumaroyl-CoA + AMP + diphosphate. Functionally, converts p-coumaric acid into p-coumaryl CoA. This is necessary for the activation of the photoactive yellow protein (PYP) chromophore. The chain is 4-coumarate--CoA ligase (pcl) from Cereibacter sphaeroides (strain ATCC 17023 / DSM 158 / JCM 6121 / CCUG 31486 / LMG 2827 / NBRC 12203 / NCIMB 8253 / ATH 2.4.1.) (Rhodobacter sphaeroides).